Reading from the N-terminus, the 443-residue chain is Chromosomal replication initiator protein DnaA (443 aa).

Residues 1-67 (MDAWSRSLER…RELLAHFAGF (67 aa)) are domain I, interacts with DnaA modulators. Residues 67–105 (FSDVFLEIGSRPRPVEAQNAPFSTPSAHVSSEPQVPFAG) form a domain II region. The interval 106-323 (NLDNHYTFAN…GALNTLTARA (218 aa)) is domain III, AAA+ region. ATP-binding residues include Gly151, Gly153, Lys154, and Thr155. Residues 324-443 (NFTGRAITTE…WDKLIRKLSE (120 aa)) are domain IV, binds dsDNA.

It belongs to the DnaA family. In terms of assembly, oligomerizes as a right-handed, spiral filament on DNA at oriC.

It is found in the cytoplasm. Functionally, plays an essential role in the initiation and regulation of chromosomal replication. ATP-DnaA binds to the origin of replication (oriC) to initiate formation of the DNA replication initiation complex once per cell cycle. Binds the DnaA box (a 9 base pair repeat at the origin) and separates the double-stranded (ds)DNA. Forms a right-handed helical filament on oriC DNA; dsDNA binds to the exterior of the filament while single-stranded (ss)DNA is stabiized in the filament's interior. The ATP-DnaA-oriC complex binds and stabilizes one strand of the AT-rich DNA unwinding element (DUE), permitting loading of DNA polymerase. After initiation quickly degrades to an ADP-DnaA complex that is not apt for DNA replication. Binds acidic phospholipids. The protein is Chromosomal replication initiator protein DnaA of Stenotrophomonas maltophilia (strain R551-3).